We begin with the raw amino-acid sequence, 396 residues long: Na(+)/H(+) antiporter NhaA 1 (396 aa).

A run of 11 helical transmembrane segments spans residues 15-35, 60-80, 96-116, 126-146, 155-175, 179-199, 207-227, 255-275, 290-312, 329-349, and 363-383; these read AGIF…VGFL, LEFW…GLEL, FLPS…FAVI, GWAI…ALLG, IFVL…IALF, ALNF…LVMC, IPFV…GIHA, SLGY…NAGV, PLGV…SWFL, LYAV…VDNL, and LAIL…AKAV.

This sequence belongs to the NhaA Na(+)/H(+) (TC 2.A.33) antiporter family.

Its subcellular location is the cell inner membrane. The catalysed reaction is Na(+)(in) + 2 H(+)(out) = Na(+)(out) + 2 H(+)(in). Its function is as follows. Na(+)/H(+) antiporter that extrudes sodium in exchange for external protons. The chain is Na(+)/H(+) antiporter NhaA 1 from Campylobacter hominis (strain ATCC BAA-381 / DSM 21671 / CCUG 45161 / LMG 19568 / NCTC 13146 / CH001A).